A 406-amino-acid chain; its full sequence is Peptide antibiotic transporter SbmA (406 aa).

Residues 1 to 11 (MFKSFFPKPGT) lie on the Periplasmic side of the membrane. A helical membrane pass occupies residues 12–32 (FFLSAFVWALIAVIFWQAGGG). Topologically, residues 33–56 (DWVARITGASGQIPISAARFWSLD) are cytoplasmic. Residues 57–77 (FLIFYAYYIVCVGLFALFWFI) form a helical membrane-spanning segment. Residues 78-87 (YSPHRWQYWS) lie on the Periplasmic side of the membrane. Residues 88 to 108 (ILGTALIIFVTWFLVEVGVAV) traverse the membrane as a helical segment. Residues 109-137 (NAWYAPFYDLIQTALSSPHKVTIEQFYRE) lie on the Cytoplasmic side of the membrane. A helical transmembrane segment spans residues 138–158 (VGVFLGIALIAVVISVLNNFF). The Periplasmic segment spans residues 159-205 (VSHYVFRWRTAMNEYYMANWQQLRHIEGAAQRVQEDTMRFASTLENM). The chain crosses the membrane as a helical span at residues 206 to 226 (GVSFINAIMTLIAFLPVLVTL). Over 227–242 (SAHVPELPIIGHIPYG) the chain is Cytoplasmic. Residues 243 to 263 (LVIAAIVWSLMGTGLLAVVGI) form a helical membrane-spanning segment. The Periplasmic portion of the chain corresponds to 264 to 331 (KLPGLEFKNQ…ARILYLQVDN (68 aa)). Residues 332–352 (VFGLFLLFPSIVAGTITLGLM) traverse the membrane as a helical segment. Topologically, residues 353–406 (TQITNVFGQVRGAFQYLINSWTTLVELMSIYKRLRSFEHELDGDKIQEVTHTLS) are cytoplasmic.

It belongs to the peptide uptake permease (PUP) (TC 9.A.18) family.

The protein resides in the cell inner membrane. Its function is as follows. Uptake of antimicrobial peptides. The sequence is that of Peptide antibiotic transporter SbmA (sbmA) from Escherichia coli O157:H7.